The primary structure comprises 327 residues: 2-methoxy-6-polyprenyl-1,4-benzoquinol methylase, mitochondrial (327 aa).

The N-terminal 49 residues, 1 to 49, are a transit peptide targeting the mitochondrion; that stretch reads MAAPRSCVLWSYCGHGWSRLAGDCRLPGFRRSWLGATLSARSLSQEKRA. Residues Thr-117, Asp-171, and 199-200 contribute to the S-adenosyl-L-methionine site; that span reads DA.

The protein belongs to the class I-like SAM-binding methyltransferase superfamily. MenG/UbiE family. Component of a multi-subunit COQ enzyme complex, composed of at least COQ3, COQ4, COQ5, COQ6, COQ7 and COQ9. Interacts with PYURF; the interaction is direct, stabilizes COQ5 protein and associates PYURF with COQ enzyme complex.

It is found in the mitochondrion inner membrane. It carries out the reaction 2-methoxy-6-(all-trans-decaprenyl)benzene-1,4-diol + S-adenosyl-L-methionine = 5-methoxy-2-methyl-3-(all-trans-decaprenyl)benzene-1,4-diol + S-adenosyl-L-homocysteine + H(+). It participates in cofactor biosynthesis; ubiquinone biosynthesis. In terms of biological role, methyltransferase required for the conversion of 2-decaprenyl-6-methoxy-1,4-benzoquinol (DDMQH2) to 2-decaprenyl-3-methyl-6-methoxy-1,4-benzoquinol (DMQH2). This chain is 2-methoxy-6-polyprenyl-1,4-benzoquinol methylase, mitochondrial, found in Rattus norvegicus (Rat).